Here is a 207-residue protein sequence, read N- to C-terminus: ATP-dependent Clp protease proteolytic subunit (207 aa).

Serine 111 acts as the Nucleophile in catalysis. Histidine 136 is a catalytic residue.

It belongs to the peptidase S14 family. In terms of assembly, fourteen ClpP subunits assemble into 2 heptameric rings which stack back to back to give a disk-like structure with a central cavity, resembling the structure of eukaryotic proteasomes.

It is found in the cytoplasm. It carries out the reaction Hydrolysis of proteins to small peptides in the presence of ATP and magnesium. alpha-casein is the usual test substrate. In the absence of ATP, only oligopeptides shorter than five residues are hydrolyzed (such as succinyl-Leu-Tyr-|-NHMec, and Leu-Tyr-Leu-|-Tyr-Trp, in which cleavage of the -Tyr-|-Leu- and -Tyr-|-Trp bonds also occurs).. Functionally, cleaves peptides in various proteins in a process that requires ATP hydrolysis. Has a chymotrypsin-like activity. Plays a major role in the degradation of misfolded proteins. This chain is ATP-dependent Clp protease proteolytic subunit, found in Pectobacterium atrosepticum (strain SCRI 1043 / ATCC BAA-672) (Erwinia carotovora subsp. atroseptica).